The following is a 5125-amino-acid chain: Usherin (5125 aa).

A signal peptide spans 1 to 33; sequence MYYLALSSGFLGQAIKTSILAYLASVLLAASQG. N-linked (GlcNAc...) asparagine glycans are attached at residues asparagine 120, asparagine 229, asparagine 257, asparagine 273, asparagine 414, asparagine 447, and asparagine 468. In terms of domain architecture, Laminin N-terminal spans 273–513; sequence NVSLTNREIL…AVDEITIIGR (241 aa). Cystine bridges form between cysteine 514–cysteine 523, cysteine 516–cysteine 532, cysteine 534–cysteine 545, cysteine 548–cysteine 568, cysteine 571–cysteine 580, cysteine 573–cysteine 601, cysteine 604–cysteine 613, cysteine 616–cysteine 634, cysteine 637–cysteine 651, cysteine 639–cysteine 658, cysteine 660–cysteine 669, cysteine 672–cysteine 687, cysteine 690–cysteine 704, cysteine 692–cysteine 711, cysteine 713–cysteine 722, cysteine 725–cysteine 740, cysteine 743–cysteine 755, cysteine 745–cysteine 762, cysteine 764–cysteine 773, cysteine 776–cysteine 788, cysteine 791–cysteine 804, cysteine 793–cysteine 811, cysteine 813–cysteine 822, cysteine 825–cysteine 840, cysteine 843–cysteine 857, cysteine 845–cysteine 864, cysteine 866–cysteine 875, cysteine 878–cysteine 893, cysteine 896–cysteine 909, cysteine 898–cysteine 916, cysteine 918–cysteine 927, cysteine 930–cysteine 944, cysteine 947–cysteine 959, cysteine 949–cysteine 966, cysteine 981–cysteine 995, cysteine 998–cysteine 1010, cysteine 1000–cysteine 1017, cysteine 1019–cysteine 1028, and cysteine 1031–cysteine 1046. Laminin EGF-like domains lie at 514–570, 571–636, 637–689, 690–742, 743–790, 791–842, 843–895, 896–946, 947–997, and 998–1048; these read CQCH…NCKP, CQCH…VCKH, CDCN…CCRP, CDCN…GCEP, CHCN…ACEV, CDCN…LCLP, CNCE…GCQA, CDCD…GCLP, CLCH…RCRP, and CHCH…ACSK. Residue asparagine 646 is glycosylated (N-linked (GlcNAc...) asparagine). 2 N-linked (GlcNAc...) asparagine glycosylation sites follow: asparagine 835 and asparagine 852. N-linked (GlcNAc...) asparagine glycosylation is present at asparagine 884. Asparagine 940 carries an N-linked (GlcNAc...) asparagine glycan. Residue asparagine 1007 is glycosylated (N-linked (GlcNAc...) asparagine). 4 consecutive Fibronectin type-III domains span residues 1054-1142, 1146-1240, 1241-1356, and 1357-1461; these read PPPR…TKPE, GHLN…APPQ, RQEP…SAPV, and FMAA…AAPA. Residues asparagine 1067, asparagine 1149, asparagine 1170, asparagine 1221, asparagine 1304, and asparagine 1381 are each glycosylated (N-linked (GlcNAc...) asparagine). 2 Laminin G-like domains span residues 1510–1697 and 1702–1879; these read TKGT…WEGC and EEGV…QDGC. 2 disulfides stabilise this stretch: cysteine 1660-cysteine 1697 and cysteine 1850-cysteine 1879. 29 Fibronectin type-III domains span residues 1857–1943, 1945–2042, 2043–2132, 2133–2230, 2231–2318, 2319–2421, 2425–2519, 2520–2613, 2614–2709, 2713–2806, 2807–2910, 2914–3005, 3009–3099, 3380–3485, 3486–3577, 3580–3670, 3672–3762, 3765–3852, 3853–3950, 3951–4054, 4055–4143, 4144–4251, 4252–4344, 4345–4432, 4433–4517, 4518–4620, 4625–4720, 4721–4813, and 4814–4916; these read TRGA…SAPH, VPTP…TPQE, APQE…LPPE, RVDP…TVPE, GVPA…APPE, GTVN…MPPG, GLLS…TTED, KPGP…TPEG, IPGP…TRPS, GVQP…THPA, LPQE…TLAG, RGAT…TWEE, GMRP…TPSG, ATEE…TRED, VPQG…TRGV, SVPP…AAPQ, VWVT…TPED, PPCN…TLEA, APVG…TLEA, PPQD…SAPS, GLMN…APPD, SQMA…APPD, GLSP…ASPA, GVSP…APPE, DMDP…TSPS, APSG…IPPL, PHLE…TGPA, PPEG…THPA, and PPSG…TKKE. Residues 1930–1950 are disordered; that stretch reads SDWSRGRTLGSAPHSVPTPSR.

Interacts with collagen IV and fibronectin via its laminin EGF-like domains. Interaction with collagen may be required for stable integration into the basement membrane. Interacts with NINL. Interacts with USH1C. Interacts (via the cytoplasmic region) with PDZD7. Component of USH2 complex, composed of ADGRV1, PDZD7, USH2A and WHRN. Interacts with ADGRV1/MASS1 (via N-terminal PDZ domain). Interacts (via the cytoplasmic region) with WHRN. Interacts (via the cytoplasmic region) with VEZT and MYO7A (via MyTH4-FERM domains); the interaction associates VEZT with the USH2 complex at the stereocilia base. Present in the synaptic terminals of inner ear hair cells (at protein level). Predominantly expressed in the retina and cochlea. Weakly expressed in brain and kidney. Detectable from E17 in the neural epithelium, but not in the retinal pigment epithelium (RPE) of the developing retina. After birth, it is expressed at P7 and remains expressed during adulthood.

Its subcellular location is the secreted. The protein localises to the cell projection. It localises to the stereocilium membrane. The protein resides in the photoreceptor inner segment. In terms of biological role, involved in hearing and vision as member of the USH2 complex. In the inner ear, required for the hair bundle ankle formation, which connects growing stereocilia in developing cochlear hair cells. In retina photoreceptors, the USH2 complex is required for the maintenance of periciliary membrane complex that seems to play a role in regulating intracellular protein transport. In Rattus norvegicus (Rat), this protein is Usherin (Ush2a).